We begin with the raw amino-acid sequence, 496 residues long: Glycogen synthase (496 aa).

An ADP-alpha-D-glucose-binding site is contributed by Lys24.

This sequence belongs to the glycosyltransferase 1 family. Bacterial/plant glycogen synthase subfamily.

It carries out the reaction [(1-&gt;4)-alpha-D-glucosyl](n) + ADP-alpha-D-glucose = [(1-&gt;4)-alpha-D-glucosyl](n+1) + ADP + H(+). Its pathway is glycan biosynthesis; glycogen biosynthesis. In terms of biological role, synthesizes alpha-1,4-glucan chains using ADP-glucose. In Nitrosospira multiformis (strain ATCC 25196 / NCIMB 11849 / C 71), this protein is Glycogen synthase.